The primary structure comprises 714 residues: ATP-dependent DNA helicase DinG (714 aa).

One can recognise a Helicase ATP-binding domain in the interval 17 to 294; sequence ALQDQIPDFI…TCMEQFRPKT (278 aa). 54 to 61 contributes to the ATP binding site; sequence APTGVGKT. [4Fe-4S] cluster-binding residues include C120, C194, C199, and C205. The DEAH box motif lies at 248 to 251; sequence DEGH. In terms of domain architecture, Helicase C-terminal spans 517-698; that stretch reads HIAEMAAYFR…VFPIEQPAVP (182 aa).

Belongs to the helicase family. DinG subfamily. Type 1 sub-subfamily. The cofactor is [4Fe-4S] cluster.

It catalyses the reaction Couples ATP hydrolysis with the unwinding of duplex DNA at the replication fork by translocating in the 5'-3' direction. This creates two antiparallel DNA single strands (ssDNA). The leading ssDNA polymer is the template for DNA polymerase III holoenzyme which synthesizes a continuous strand.. It carries out the reaction ATP + H2O = ADP + phosphate + H(+). Its function is as follows. DNA-dependent ATPase and 5'-3' DNA helicase. Unwinds D-loops, R-loops, forked DNA and G-quadruplex DNA. The polypeptide is ATP-dependent DNA helicase DinG (Salmonella paratyphi A (strain ATCC 9150 / SARB42)).